Consider the following 232-residue polypeptide: Cell surface superoxide dismutase [Cu-Zn] 4 (232 aa).

Positions 1 to 15 (MKYLSIISIVALALA) are cleaved as a signal peptide. An N-linked (GlcNAc...) asparagine glycan is attached at Asn53. His75 and His77 together coordinate Cu cation. Asn86 carries N-linked (GlcNAc...) asparagine glycosylation. His93 is a binding site for Cu cation. His93 contributes to the Zn(2+) binding site. N-linked (GlcNAc...) asparagine glycosylation is present at Asn98. Asp113 contributes to the Zn(2+) binding site. N-linked (GlcNAc...) asparagine glycosylation is present at Asn120. His153 lines the Cu cation pocket. 5 N-linked (GlcNAc...) asparagine glycosylation sites follow: Asn156, Asn164, Asn182, Asn193, and Asn196. Low complexity predominate over residues 174–208 (TASAATWSNSSSSSSSSSKNSTNGSSGSSTSASQG). The tract at residues 174–211 (TASAATWSNSSSSSSSSSKNSTNGSSGSSTSASQGSGA) is disordered. Ser209 carries the GPI-anchor amidated serine lipid modification. The propeptide at 210–232 (GAGRAEISGFLAAGIAGVVAALI) is removed in mature form. Arg213 lines the substrate pocket.

The protein belongs to the Cu-Zn superoxide dismutase family. It depends on Cu cation as a cofactor. The cofactor is Zn(2+). In terms of processing, the GPI-anchor is attached to the protein in the endoplasmic reticulum and serves to target the protein to the cell surface. There, the glucosamine-inositol phospholipid moiety is cleaved off and the GPI-modified mannoprotein is covalently attached via its lipidless GPI glycan remnant to the 1,6-beta-glucan of the outer cell wall layer.

It localises to the secreted. The protein localises to the cell wall. The protein resides in the membrane. It carries out the reaction 2 superoxide + 2 H(+) = H2O2 + O2. Superoxide dismutases serve to convert damaging superoxide radicals, a key form of ROS, to less damaging hydrogen peroxide that can be converted into water by catalase action. Degrades host-derived reactive oxygen species to escape innate immune surveillance. Involved in the occurrence of miconazole-tolerant persisters in biofilms. Persisters are cells that survive high doses of an antimicrobial agent. This Candida albicans (strain SC5314 / ATCC MYA-2876) (Yeast) protein is Cell surface superoxide dismutase [Cu-Zn] 4 (SOD4).